The primary structure comprises 376 residues: Erythronate-4-phosphate dehydrogenase (376 aa).

The substrate site is built by S45 and T67. An NAD(+)-binding site is contributed by D147. R209 is a catalytic residue. D233 is a binding site for NAD(+). Residue E238 is part of the active site. H255 functions as the Proton donor in the catalytic mechanism. An NAD(+)-binding site is contributed by G258. Y259 contacts substrate.

This sequence belongs to the D-isomer specific 2-hydroxyacid dehydrogenase family. PdxB subfamily. As to quaternary structure, homodimer.

Its subcellular location is the cytoplasm. It catalyses the reaction 4-phospho-D-erythronate + NAD(+) = (R)-3-hydroxy-2-oxo-4-phosphooxybutanoate + NADH + H(+). Its pathway is cofactor biosynthesis; pyridoxine 5'-phosphate biosynthesis; pyridoxine 5'-phosphate from D-erythrose 4-phosphate: step 2/5. Functionally, catalyzes the oxidation of erythronate-4-phosphate to 3-hydroxy-2-oxo-4-phosphonooxybutanoate. The sequence is that of Erythronate-4-phosphate dehydrogenase from Shewanella baltica (strain OS155 / ATCC BAA-1091).